Here is an 87-residue protein sequence, read N- to C-terminus: Large ribosomal subunit protein bL27 (87 aa).

It belongs to the bacterial ribosomal protein bL27 family.

This chain is Large ribosomal subunit protein bL27, found in Stenotrophomonas maltophilia (strain R551-3).